The sequence spans 253 residues: MSCTIEKALADAKALVERLRDHDDAAESLIEQTTALSKRVEAMKQYQEEIQELNEVARHRPRSTLVMGIQQENRQIRELQQENKELRTSLEEHQSALELIMSKYREQMFRLLMASKKDDPGIIMKLKEQHSKIDMVHRNSCEGFFLDASRHILEAPQHGLERRHLEANQNELQAHVDQITEMAAVMRKAIEIDEQQGCKEQERIFQLEQENKGLREILQITRESFLNLRKDDASESTSLSALVTNSDLSLRKS.

Residues 5–104 (IEKALADAKA…SALELIMSKY (100 aa)) adopt a coiled-coil conformation. Phosphoserine is present on S140. Positions 160-223 (LERRHLEANQ…LREILQITRE (64 aa)) form a coiled coil. The tract at residues 231–253 (DDASESTSLSALVTNSDLSLRKS) is disordered. The segment covering 235-253 (ESTSLSALVTNSDLSLRKS) has biased composition (polar residues).

The protein belongs to the SIKE family.

The protein localises to the cytoplasm. Its function is as follows. May be involved in wound healing pathway. In Mus musculus (Mouse), this protein is FGFR1 oncogene partner 2 homolog (Fgfr1op2).